The primary structure comprises 201 residues: Dephospho-CoA kinase (201 aa).

The DPCK domain maps to 7–201 (AIALSGGIGT…IETIKKDFHV (195 aa)). 15-20 (GTGKST) lines the ATP pocket.

This sequence belongs to the CoaE family.

It localises to the cytoplasm. The catalysed reaction is 3'-dephospho-CoA + ATP = ADP + CoA + H(+). The protein operates within cofactor biosynthesis; coenzyme A biosynthesis; CoA from (R)-pantothenate: step 5/5. In terms of biological role, catalyzes the phosphorylation of the 3'-hydroxyl group of dephosphocoenzyme A to form coenzyme A. This chain is Dephospho-CoA kinase, found in Wolinella succinogenes (strain ATCC 29543 / DSM 1740 / CCUG 13145 / JCM 31913 / LMG 7466 / NCTC 11488 / FDC 602W) (Vibrio succinogenes).